Reading from the N-terminus, the 337-residue chain is Putative transcription activator protein HfaB (337 aa).

The segment covering 303–313 (AYNNLGTNNAQ) has biased composition (polar residues). A disordered region spans residues 303 to 337 (AYNNLGTNNAQTRDDPSRWNARRDPDIRDAKRGRY). Residues 314 to 337 (TRDDPSRWNARRDPDIRDAKRGRY) are compositionally biased toward basic and acidic residues.

Its function is as follows. Required for the attachment of the holdfast to the cell. May be involved in the positive regulation of hfaC. The polypeptide is Putative transcription activator protein HfaB (hfaB) (Caulobacter vibrioides (strain ATCC 19089 / CIP 103742 / CB 15) (Caulobacter crescentus)).